Consider the following 188-residue polypeptide: Peptidyl-tRNA hydrolase (188 aa).

Residue F15 participates in tRNA binding. Catalysis depends on H20, which acts as the Proton acceptor. The tRNA site is built by Y64, N66, and N112.

This sequence belongs to the PTH family. Monomer.

Its subcellular location is the cytoplasm. It catalyses the reaction an N-acyl-L-alpha-aminoacyl-tRNA + H2O = an N-acyl-L-amino acid + a tRNA + H(+). Its function is as follows. Hydrolyzes ribosome-free peptidyl-tRNAs (with 1 or more amino acids incorporated), which drop off the ribosome during protein synthesis, or as a result of ribosome stalling. In terms of biological role, catalyzes the release of premature peptidyl moieties from peptidyl-tRNA molecules trapped in stalled 50S ribosomal subunits, and thus maintains levels of free tRNAs and 50S ribosomes. The polypeptide is Peptidyl-tRNA hydrolase (Borrelia turicatae (strain 91E135)).